Reading from the N-terminus, the 183-residue chain is Adenine phosphoribosyltransferase (183 aa).

The protein belongs to the purine/pyrimidine phosphoribosyltransferase family. In terms of assembly, homodimer.

It is found in the cytoplasm. It carries out the reaction AMP + diphosphate = 5-phospho-alpha-D-ribose 1-diphosphate + adenine. Its pathway is purine metabolism; AMP biosynthesis via salvage pathway; AMP from adenine: step 1/1. In terms of biological role, catalyzes a salvage reaction resulting in the formation of AMP, that is energically less costly than de novo synthesis. In Corynebacterium kroppenstedtii (strain DSM 44385 / JCM 11950 / CIP 105744 / CCUG 35717), this protein is Adenine phosphoribosyltransferase.